Here is a 110-residue protein sequence, read N- to C-terminus: Non-specific lipid-transfer protein 4 (110 aa).

The first 17 residues, C1–G17, serve as a signal peptide directing secretion. 4 disulfides stabilise this stretch: C21-C68, C31-C45, C46-C91, and C66-C105.

This sequence belongs to the plant LTP family.

Plant non-specific lipid-transfer proteins transfer phospholipids as well as galactolipids across membranes. May play a role in wax or cutin deposition in the cell walls of expanding epidermal cells and certain secretory tissues. The chain is Non-specific lipid-transfer protein 4 from Lens culinaris (Lentil).